We begin with the raw amino-acid sequence, 26 residues long: Acyl carrier protein (26 aa).

The 25-residue stretch at 2–26 (SDIEQRIKQAVAEQLGMRAEEIKNE) folds into the Carrier domain.

This sequence belongs to the acyl carrier protein (ACP) family. 4'-phosphopantetheine is transferred from CoA to a specific serine of apo-ACP by AcpS. This modification is essential for activity because fatty acids are bound in thioester linkage to the sulfhydryl of the prosthetic group.

It is found in the cytoplasm. It functions in the pathway lipid metabolism; fatty acid biosynthesis. Carrier of the growing fatty acid chain in fatty acid biosynthesis. This is Acyl carrier protein (acpP) from Acinetobacter calcoaceticus.